A 607-amino-acid polypeptide reads, in one-letter code: Siderochrome iron transporter 2 (607 aa).

The interval 1–46 is disordered; the sequence is MGLFGSFGARNKATPQVPPGAVAKAPEGTPKGPETNDQPDMDSSRL. The next 13 membrane-spanning stretches (helical) occupy residues 86–106, 129–149, 152–172, 180–200, 210–230, 242–262, 297–317, 326–346, 367–387, 404–424, 432–452, 459–479, and 499–519; these read VWAT…QSGI, ILSS…LNLW, AEGF…LAAC, AGYV…DVFV, AFTF…APLA, WAYG…AVVF, IIGA…FSLA, SAAF…FAAW, LGAC…DLYF, YMTQ…GLWV, HTCL…MIHF, IGYV…LVIG, and FIGL…AAIY. Asn-538 carries an N-linked (GlcNAc...) asparagine glycan. A helical membrane pass occupies residues 573–593; that stretch reads FGAVAATCILILGIPAIAVWK.

Belongs to the major facilitator superfamily.

The protein resides in the cell membrane. In terms of biological role, major facilitator transporter involved in ferrichrome (FC) uptake. The chain is Siderochrome iron transporter 2 from Aspergillus fumigatus (strain ATCC MYA-4609 / CBS 101355 / FGSC A1100 / Af293) (Neosartorya fumigata).